The sequence spans 315 residues: Lamassu protein LmuA (315 aa).

Its function is as follows. Component of antiviral defense system Lamassu type I, composed of LmuA and LmuB. Expression of Lamassu type I in B.subtilis (strain BEST7003) confers resistance to phages phi3T, SpBeta and SPR. This chain is Lamassu protein LmuA, found in Bacillus sp. (strain NCIM 5461 / CCTCC AB 2011126 / NIO-1130).